We begin with the raw amino-acid sequence, 369 residues long: 4-hydroxy-3-methylbut-2-en-1-yl diphosphate synthase (flavodoxin) (369 aa).

Residues cysteine 270, cysteine 273, cysteine 305, and glutamate 312 each contribute to the [4Fe-4S] cluster site.

It belongs to the IspG family. [4Fe-4S] cluster serves as cofactor.

The catalysed reaction is (2E)-4-hydroxy-3-methylbut-2-enyl diphosphate + oxidized [flavodoxin] + H2O + 2 H(+) = 2-C-methyl-D-erythritol 2,4-cyclic diphosphate + reduced [flavodoxin]. It functions in the pathway isoprenoid biosynthesis; isopentenyl diphosphate biosynthesis via DXP pathway; isopentenyl diphosphate from 1-deoxy-D-xylulose 5-phosphate: step 5/6. Its function is as follows. Converts 2C-methyl-D-erythritol 2,4-cyclodiphosphate (ME-2,4cPP) into 1-hydroxy-2-methyl-2-(E)-butenyl 4-diphosphate. This Haemophilus ducreyi (strain 35000HP / ATCC 700724) protein is 4-hydroxy-3-methylbut-2-en-1-yl diphosphate synthase (flavodoxin).